Here is a 236-residue protein sequence, read N- to C-terminus: Class B acid phosphatase (236 aa).

The N-terminal stretch at 1–22 (MKNVMKLSVIALLTAAAVPAMA) is a signal peptide. The active-site Nucleophile is the aspartate 67. Mg(2+)-binding residues include aspartate 67 and aspartate 69. Catalysis depends on aspartate 69, which acts as the Proton donor. Substrate-binding positions include 136–137 (TG) and lysine 176. Aspartate 191 is a Mg(2+) binding site.

This sequence belongs to the class B bacterial acid phosphatase family. Homotetramer. The cofactor is Mg(2+).

It is found in the periplasm. The enzyme catalyses a phosphate monoester + H2O = an alcohol + phosphate. Functionally, dephosphorylates several organic phosphate monoesters. Also has a phosphotransferase activity catalyzing the transfer of low-energy phosphate groups from organic phosphate monoesters to free hydroxyl groups of various organic compounds. The sequence is that of Class B acid phosphatase (aphA) from Haemophilus influenzae (strain ATCC 51907 / DSM 11121 / KW20 / Rd).